The sequence spans 290 residues: Transmembrane protein 33 homolog (290 aa).

Disordered regions lie at residues M1–G22 and I39–A72. The segment covering S45–A72 has biased composition (low complexity). A run of 4 helical transmembrane segments spans residues L83–I103, F109–F129, F150–P170, and I218–I238.

This sequence belongs to the PER33/POM33 family.

The protein localises to the membrane. The protein is Transmembrane protein 33 homolog (tmem33) of Dictyostelium discoideum (Social amoeba).